The chain runs to 155 residues: UPF0178 protein RPC_3085 (155 aa).

Belongs to the UPF0178 family.

In Rhodopseudomonas palustris (strain BisB18), this protein is UPF0178 protein RPC_3085.